The primary structure comprises 491 residues: AP-2 complex subunit mu (491 aa).

Residues Ser179, Ser180, and Ser181 each carry the phosphoserine modification. The 282-residue stretch at 209-490 (KDEVFLYVNE…ISKAGSYEVR (282 aa)) folds into the MHD domain.

It belongs to the adaptor complexes medium subunit family. In terms of assembly, adaptor protein complex 2 (AP-2) is a heterotetramer composed of two large adaptins (alpha-type subunit APL3 and beta-type subunit APL1), a medium chain (mu-type subunit APM4) and a small adaptin (sigma-type subunit APS2).

The protein localises to the membrane. The protein resides in the clathrin-coated pit. It is found in the cytoplasmic vesicle. Its subcellular location is the clathrin-coated vesicle membrane. Its function is as follows. Component of the adaptor complexes which link clathrin to receptors in coated vesicles. Clathrin-associated protein complexes are believed to interact with the cytoplasmic tails of membrane proteins, leading to their selection and concentration. This Saccharomyces cerevisiae (strain ATCC 204508 / S288c) (Baker's yeast) protein is AP-2 complex subunit mu (APM4).